Here is a 131-residue protein sequence, read N- to C-terminus: Large ribosomal subunit protein bL17 (131 aa).

It belongs to the bacterial ribosomal protein bL17 family. In terms of assembly, part of the 50S ribosomal subunit. Contacts protein L32.

This chain is Large ribosomal subunit protein bL17, found in Azoarcus sp. (strain BH72).